The sequence spans 75 residues: Putative UPF0377 protein YJL222W-A (75 aa).

The protein belongs to the UPF0377 family.

The protein is Putative UPF0377 protein YJL222W-A of Saccharomyces cerevisiae (strain ATCC 204508 / S288c) (Baker's yeast).